Reading from the N-terminus, the 430-residue chain is Asparagine--tRNA ligase (430 aa).

It belongs to the class-II aminoacyl-tRNA synthetase family. As to quaternary structure, homodimer.

It is found in the cytoplasm. The enzyme catalyses tRNA(Asn) + L-asparagine + ATP = L-asparaginyl-tRNA(Asn) + AMP + diphosphate + H(+). The chain is Asparagine--tRNA ligase from Staphylococcus saprophyticus subsp. saprophyticus (strain ATCC 15305 / DSM 20229 / NCIMB 8711 / NCTC 7292 / S-41).